Reading from the N-terminus, the 399-residue chain is Sphingosine-1-phosphate phosphatase 2 (399 aa).

The next 4 helical transmembrane spans lie at 88 to 108 (YLFQ…FLPF), 121 to 141 (LIII…VLKW), 160 to 180 (YGMP…LLIS), and 185 to 205 (YQYP…LVCL). The interval 136 to 144 (KDVLKWPRP) is phosphatase sequence motif I. The segment at 163 to 166 (PSTH) is phosphatase sequence motif II. The active-site Proton donor is the H166. A phosphatase sequence motif III region spans residues 206–217 (SRLYTGMHTVLD). H213 serves as the catalytic Nucleophile. A run of 5 helical transmembrane segments spans residues 219 to 239 (LGGV…WTFI), 247 to 267 (PLFP…YPVS), 280 to 300 (ILAA…FQLV), 318 to 338 (TYML…ILLV), and 371 to 391 (VPYK…FVPM).

This sequence belongs to the type 2 lipid phosphate phosphatase family. In terms of tissue distribution, expressed strongly in kidney and heart, followed by brain, colon, small intestine and lung. Not detected in skeletal muscle, thymus, spleen, liver, placenta, and peripheral blood leukocytes.

It is found in the endoplasmic reticulum membrane. The catalysed reaction is sphinganine 1-phosphate + H2O = sphinganine + phosphate. The enzyme catalyses sphing-4-enine 1-phosphate + H2O = sphing-4-enine + phosphate. It catalyses the reaction (4R)-hydroxysphinganine 1-phosphate + H2O = (4R)-hydroxysphinganine + phosphate. Its function is as follows. Has specific phosphohydrolase activity towards sphingoid base 1-phosphates. Has high phosphohydrolase activity against dihydrosphingosine-1-phosphate and sphingosine-1-phosphate (S1P) in vitro. Sphingosine-1-phosphate phosphatase activity is needed for efficient recycling of sphingosine into the sphingolipid synthesis pathway. May play a role in attenuating intracellular sphingosine 1-phosphate (S1P) signaling. May play a role in pro-inflammatory signaling. Plays a role in the regulation of pancreatic islet beta-cell endoplasmic reticulum stress and proliferation. This Homo sapiens (Human) protein is Sphingosine-1-phosphate phosphatase 2.